Here is a 228-residue protein sequence, read N- to C-terminus: CD9 antigen (228 aa).

The Cytoplasmic portion of the chain corresponds to 1–12 (MPVKGGTKCIKY). The S-palmitoyl cysteine moiety is linked to residue Cys9. Residues 13–33 (LLFGFNFIFWLAGIAVLAIGL) form a helical membrane-spanning segment. The Extracellular portion of the chain corresponds to 34 to 55 (WLRFDSQTKSIFEQETNNNNSS). N-linked (GlcNAc...) asparagine glycans are attached at residues Asn52 and Asn53. The helical transmembrane segment at 56-76 (FYTGVYILIGAGALMMLVGFL) threads the bilayer. At 77–87 (GCCGAVQESQC) the chain is on the cytoplasmic side. S-palmitoyl cysteine attachment occurs at residues Cys78, Cys79, and Cys87. Residues 88–111 (MLGLFFGFLLVIFAIEIAAAIWGY) traverse the membrane as a helical segment. The Extracellular segment spans residues 112 to 195 (SHKDEVIKEV…KEVFDNKFHI (84 aa)). 2 cysteine pairs are disulfide-bonded: Cys152/Cys181 and Cys153/Cys167. Residues 196–221 (IGAVGIGIAVVMIFGMIFSMILCCAI) form a helical membrane-spanning segment. S-palmitoyl cysteine attachment occurs at residues Cys218 and Cys219. The Cytoplasmic portion of the chain corresponds to 222-228 (RRNREMV).

The protein belongs to the tetraspanin (TM4SF) family. As to quaternary structure, forms both disulfide-linked homodimers and higher homooligomers as well as heterooligomers with other members of the tetraspanin family. Interacts (via the second extracellular domain) with integrin ITGAV:ITGB3. Interacts with integrin ITGA6:ITGB1; interaction takes place in oocytes and is involved in sperm-egg fusion. Part of integrin-tetraspanin complexes composed of CD81, beta-1 and beta-2 integrins in the membrane of monocyte/macrophages. Interacts with CD63; identified in a complex with CD63 and ITGB3. Associates with CR2/CD21 and with PTGFRN/CD9P1. Part of a complex composed of CD9, CD81, PTGFRN and IGSF8. Interacts directly with IGSF8. Interacts with PDPN; this interaction is homophilic and attenuates platelet aggregation and pulmonary metastasis induced by PDPN. Interacts (on T cell side) with CD81 at immunological synapses between antigen-presenting cells and T cells. In terms of processing, palmitoylated at a low, basal level in unstimulated platelets. The level of palmitoylation increases when platelets are activated by thrombin (in vitro). The protein exists in three forms with molecular masses between 22 and 27 kDa, and is known to carry covalently linked fatty acids. Palmitoylation by ZDHHC2 regulates CD9 expression, association with other tetraspanin family proteins and function in cell adhesion.

It is found in the cell membrane. The protein resides in the membrane. It localises to the secreted. The protein localises to the extracellular exosome. Integral membrane protein associated with integrins, which regulates different processes, such as sperm-egg fusion, platelet activation and aggregation, and cell adhesion. Present at the cell surface of oocytes and plays a key role in sperm-egg fusion, possibly by organizing multiprotein complexes and the morphology of the membrane required for the fusion. In myoblasts, associates with CD81 and PTGFRN and inhibits myotube fusion during muscle regeneration. In macrophages, associates with CD81 and beta-1 and beta-2 integrins, and prevents macrophage fusion into multinucleated giant cells specialized in ingesting complement-opsonized large particles. Also prevents the fusion between mononuclear cell progenitors into osteoclasts in charge of bone resorption. Acts as a receptor for PSG17. Involved in platelet activation and aggregation. Regulates paranodal junction formation. Involved in cell adhesion, cell motility and tumor metastasis. The chain is CD9 antigen from Chlorocebus aethiops (Green monkey).